An 85-amino-acid polypeptide reads, in one-letter code: Putative membrane protein insertion efficiency factor (85 aa).

Belongs to the UPF0161 family.

It localises to the cell inner membrane. In terms of biological role, could be involved in insertion of integral membrane proteins into the membrane. The protein is Putative membrane protein insertion efficiency factor of Escherichia fergusonii (strain ATCC 35469 / DSM 13698 / CCUG 18766 / IAM 14443 / JCM 21226 / LMG 7866 / NBRC 102419 / NCTC 12128 / CDC 0568-73).